Consider the following 143-residue polypeptide: Mediator of RNA polymerase II transcription subunit 9 (143 aa).

Positions 84 to 141 (QDCNHKIFELQKRFESAREQIRQLPGIDYNKDEQLQRLELLRNQFKLKQQLIRKYKDT) form a coiled coil.

Belongs to the Mediator complex subunit 9 family. As to quaternary structure, component of the Mediator complex.

The protein localises to the nucleus. In terms of biological role, component of the Mediator complex, a coactivator involved in the regulated transcription of nearly all RNA polymerase II-dependent genes. Mediator functions as a bridge to convey information from gene-specific regulatory proteins to the basal RNA polymerase II transcription machinery. Mediator is recruited to promoters by direct interactions with regulatory proteins and serves as a scaffold for the assembly of a functional preinitiation complex with RNA polymerase II and the general transcription factors. The polypeptide is Mediator of RNA polymerase II transcription subunit 9 (MED9) (Drosophila pseudoobscura pseudoobscura (Fruit fly)).